A 376-amino-acid chain; its full sequence is Transcription initiation factor IIA subunit 1 (376 aa).

Ala-2 carries the post-translational modification N-acetylalanine. Low complexity-rich tracts occupy residues 69–79 (QVQQQHQPQQQ) and 89–105 (QAQP…TQQV). 3 disordered regions span residues 69 to 107 (QVQQ…QVLI), 247 to 266 (QAQI…AQTQ), and 274 to 329 (DGTG…QELF). Phosphoserine; by TAF1 is present on residues Ser-280, Ser-281, Ser-316, and Ser-321. Over residues 280–329 (SSEEDEDEEEDYDDDEEEDKEKDGAEDGQVEEEPLNSEDDVSDEEGQELF) the composition is skewed to acidic residues. The DNA site is built by His-343 and Arg-344.

This sequence belongs to the TFIIA subunit 1 family. As to quaternary structure, TFIIA is a heterodimer of the large unprocessed subunit 1 and a small subunit gamma. It was originally believed to be a heterotrimer of an alpha (p35), a beta (p19) and a gamma subunit (p12). TFIIA forms a complex with TBP. Part of TBP-based Pol II pre-initiation complex (PIC), in which Pol II core assembles with general transcription factors and other specific initiation factors including GTF2E1, GTF2E2, GTF2F1, GTF2F2, TCEA1, ERCC2, ERCC3, GTF2H2, GTF2H3, GTF2H4, GTF2H5, GTF2A1, GTF2A2, GTF2B and TBP; this large multi-subunit PIC complex mediates DNA unwinding and targets Pol II core to the transcription start site where the first phosphodiester bond forms. The alpha and beta subunits are postranslationally produced from the precursor form by TASP1. The cleavage promotes proteasomal degradation.

The protein resides in the nucleus. TFIIA is a component of the transcription machinery of RNA polymerase II and plays an important role in transcriptional activation. TFIIA in a complex with TBP mediates transcriptional activity. This Homo sapiens (Human) protein is Transcription initiation factor IIA subunit 1 (GTF2A1).